Reading from the N-terminus, the 245-residue chain is Thiopurine S-methyltransferase (245 aa).

Position 29 to 40 (29 to 40 (WQEKWVSRRIGF)) interacts with S-adenosyl-L-methionine. Substrate is bound at residue Phe-40. Lys-58 carries the N6-acetyllysine modification. Leu-69, Glu-90, and Arg-152 together coordinate S-adenosyl-L-methionine.

Belongs to the class I-like SAM-binding methyltransferase superfamily. TPMT family. In terms of assembly, monomer.

The protein resides in the cytoplasm. It catalyses the reaction S-adenosyl-L-methionine + a thiopurine = S-adenosyl-L-homocysteine + a thiopurine S-methylether.. The polypeptide is Thiopurine S-methyltransferase (TPMT) (Canis lupus familiaris (Dog)).